A 289-amino-acid chain; its full sequence is 4-hydroxybenzoate octaprenyltransferase (289 aa).

9 consecutive transmembrane segments (helical) span residues 19–39 (IPILLILWPTLTALVLASHGL), 42–62 (ISYLVIFTIGVVVMRTVGCII), 85–105 (GQLSIKNAIWLCISLTLVAFI), 107–127 (VLFLNLYTILLSFVALFLAIL), 134–154 (FFAIPQLILGLAFNFGIFMAF), 165–185 (AWIFYIATICWTIAYDTIYAL), 211–231 (ILLFNFLSLLLLIILGIYCDF), 233–253 (SFFYLGVVICSLFFVRNYFLY), and 265–285 (FSANHWIGLIIFIIAVIQYII).

It belongs to the UbiA prenyltransferase family. Mg(2+) serves as cofactor.

The protein resides in the cell inner membrane. The enzyme catalyses all-trans-octaprenyl diphosphate + 4-hydroxybenzoate = 4-hydroxy-3-(all-trans-octaprenyl)benzoate + diphosphate. It participates in cofactor biosynthesis; ubiquinone biosynthesis. Functionally, catalyzes the prenylation of para-hydroxybenzoate (PHB) with an all-trans polyprenyl group. Mediates the second step in the final reaction sequence of ubiquinone-8 (UQ-8) biosynthesis, which is the condensation of the polyisoprenoid side chain with PHB, generating the first membrane-bound Q intermediate 3-octaprenyl-4-hydroxybenzoate. The chain is 4-hydroxybenzoate octaprenyltransferase from Francisella tularensis subsp. holarctica (strain FTNF002-00 / FTA).